The following is a 271-amino-acid chain: Ribosomal RNA small subunit methyltransferase A (271 aa).

S-adenosyl-L-methionine contacts are provided by H14, L16, G41, E63, D89, and N107.

It belongs to the class I-like SAM-binding methyltransferase superfamily. rRNA adenine N(6)-methyltransferase family. RsmA subfamily.

Its subcellular location is the cytoplasm. The catalysed reaction is adenosine(1518)/adenosine(1519) in 16S rRNA + 4 S-adenosyl-L-methionine = N(6)-dimethyladenosine(1518)/N(6)-dimethyladenosine(1519) in 16S rRNA + 4 S-adenosyl-L-homocysteine + 4 H(+). Specifically dimethylates two adjacent adenosines (A1518 and A1519) in the loop of a conserved hairpin near the 3'-end of 16S rRNA in the 30S particle. May play a critical role in biogenesis of 30S subunits. The polypeptide is Ribosomal RNA small subunit methyltransferase A (Lawsonia intracellularis (strain PHE/MN1-00)).